An 831-amino-acid polypeptide reads, in one-letter code: Cysteine--tRNA ligase, cytoplasmic (831 aa).

The residue at position 2 (Ala2) is an N-acetylalanine. Phosphoserine is present on Ser102. Cys138 lines the Zn(2+) pocket. Gly139 is an L-cysteine binding site. The short motif at 140–150 is the 'HIGH' region element; it reads PTVYDASHMGH. Position 179 (Thr179) interacts with L-cysteine. The 'KIIK' region signature appears at 184–187; sequence KIIR. 2 positions are modified to phosphoserine: Ser388 and Ser390. Residues Cys431, His456, and Glu460 each contribute to the Zn(2+) site. An L-cysteine-binding site is contributed by His456. A 'KMSKS' region motif is present at residues 489-493; that stretch reads KMSKS. Lys492 serves as a coordination point for ATP. The segment covering 736 to 762 has biased composition (basic and acidic residues); sequence GKKRAEEEKRRKKEEAARKKQEQEAAK. The tract at residues 736–766 is disordered; the sequence is GKKRAEEEKRRKKEEAARKKQEQEAAKLAKM. Ser829 carries the phosphoserine modification.

Belongs to the class-I aminoacyl-tRNA synthetase family. Homodimer. It depends on Zn(2+) as a cofactor.

It is found in the cytoplasm. The catalysed reaction is tRNA(Cys) + L-cysteine + ATP = L-cysteinyl-tRNA(Cys) + AMP + diphosphate. Catalyzes the ATP-dependent ligation of cysteine to tRNA(Cys). This is Cysteine--tRNA ligase, cytoplasmic (Cars1) from Mus musculus (Mouse).